We begin with the raw amino-acid sequence, 504 residues long: ATP synthase subunit alpha (504 aa).

170–177 (GDRQTGKT) serves as a coordination point for ATP.

The protein belongs to the ATPase alpha/beta chains family. In terms of assembly, F-type ATPases have 2 components, CF(1) - the catalytic core - and CF(0) - the membrane proton channel. CF(1) has five subunits: alpha(3), beta(3), gamma(1), delta(1), epsilon(1). CF(0) has four main subunits: a(1), b(1), b'(1) and c(9-12).

It is found in the cellular thylakoid membrane. It carries out the reaction ATP + H2O + 4 H(+)(in) = ADP + phosphate + 5 H(+)(out). Functionally, produces ATP from ADP in the presence of a proton gradient across the membrane. The alpha chain is a regulatory subunit. This chain is ATP synthase subunit alpha, found in Prochlorococcus marinus (strain NATL2A).